A 428-amino-acid polypeptide reads, in one-letter code: Enolase (428 aa).

Position 165 (glutamine 165) interacts with (2R)-2-phosphoglycerate. Glutamate 207 functions as the Proton donor in the catalytic mechanism. Aspartate 244, glutamate 283, and aspartate 310 together coordinate Mg(2+). (2R)-2-phosphoglycerate is bound by residues lysine 335, arginine 364, serine 365, and lysine 386. Lysine 335 functions as the Proton acceptor in the catalytic mechanism.

The protein belongs to the enolase family. The cofactor is Mg(2+).

It localises to the cytoplasm. It is found in the secreted. The protein localises to the cell surface. The catalysed reaction is (2R)-2-phosphoglycerate = phosphoenolpyruvate + H2O. Its pathway is carbohydrate degradation; glycolysis; pyruvate from D-glyceraldehyde 3-phosphate: step 4/5. Its function is as follows. Catalyzes the reversible conversion of 2-phosphoglycerate (2-PG) into phosphoenolpyruvate (PEP). It is essential for the degradation of carbohydrates via glycolysis. The protein is Enolase of Chlamydia pneumoniae (Chlamydophila pneumoniae).